Here is a 685-residue protein sequence, read N- to C-terminus: Stromal interaction molecule 1 (685 aa).

An N-terminal signal peptide occupies residues 1–22 (MDVCARLALWLLWGLLLHQGQS). The Extracellular portion of the chain corresponds to 23–213 (LSHSHSEKNT…LLTRHNHLKD (191 aa)). The interval 24–43 (SHSHSEKNTGASSGATSEES) is disordered. Over residues 32–41 (TGASSGATSE) the composition is skewed to low complexity. EF-hand domains lie at 64–97 (SFEA…EDLN) and 102–126 (TVKH…AWKA). Ca(2+) is bound by residues Asp76, Asp78, Asn80, Asp82, and Glu87. N-linked (GlcNAc...) asparagine glycans are attached at residues Asn131 and Asn171. The 69-residue stretch at 132–200 (WTVDEVIQWL…QLKALDTVLF (69 aa)) folds into the SAM domain. A helical transmembrane segment spans residues 214-234 (FMLVVSIVIGVGGCWFAYIQN). Over 235 to 685 (RYSKEHMKKM…LKIFKKPLKK (451 aa)) the chain is Cytoplasmic. A coiled-coil region spans residues 248–442 (LEGLHRAEQS…IEILCGFQIV (195 aa)). Ser257 is subject to Phosphoserine. An SOAR/CAD region spans residues 344–442 (PEALQKWLQL…IEILCGFQIV (99 aa)). Residues 475–483 (DDVDDMDEE) form a contributes to fast Ca(2+)-dependent inactivation of CRAC channels region. Over residues 490 to 499 (MQSPSLQSSV) the composition is skewed to low complexity. The segment at 490 to 542 (MQSPSLQSSVRQRLTEPQHGLGSQRDLTHSDSESSLHTSDRQRVAPKPPQMGR) is disordered. Residue Thr504 is modified to Phosphothreonine. Phosphoserine is present on Ser512. Over residues 515–532 (DLTHSDSESSLHTSDRQR) the composition is skewed to basic and acidic residues. Thr517 is subject to Phosphothreonine. Residues Ser519, Ser521, Ser523, Ser524, Ser567, Ser575, Ser602, Ser608, Ser618, Ser621, and Ser628 each carry the phosphoserine modification. The segment at 596–685 (LMELNPSVPP…LKIFKKPLKK (90 aa)) is disordered. Over residues 608–620 (SPLLDSSHSHSPS) the composition is skewed to low complexity. The Microtubule tip localization signal signature appears at 642–645 (TRIP). Residues 655–666 (EEDNGSIGEETD) show a composition bias toward acidic residues. Ser660 bears the Phosphoserine mark. At Thr665 the chain carries Phosphothreonine. A Phosphoserine modification is found at Ser668. A compositionally biased stretch (basic residues) spans 670–685 (GRKKFPLKIFKKPLKK). Residues 672–685 (KKFPLKIFKKPLKK) are required for generation of inwardly rectifying CRAC currents.

In terms of assembly, monomer in the presence of Ca(2+). It oligomerizes in absence of Ca(2+). Forms homooligomers and heterooligomers with STIM2. Interacts with pore-forming subunits of CRAC channels, ORAI1, ORAI2 and ORAI3; this interaction is potentiated upon Ca(2+) store depletion. Interacts (via the transmembrane region and the SOAR/CAD domain) with SPPL3; the interaction promotes the binding of STIM1 to ORAI1. Interacts with ORAI1. Interacts with MAPRE1; probably required for targeting to the growing microtubule plus ends. Interacts with CRACR2A/EFCAB4B; the interaction is direct and takes place in absence of Ca(2+). Forms a complex with CRACR2A/EFCAB4B and ORAI1 at low concentration of Ca(2+), the complex dissociates at elevated Ca(2+) concentrations. Interacts with SARAF, promoting a slow inactivation of STIM1-dependent SOCE activity, possibly by facilitating the deoligomerization of STIM1. Interacts with EFHB; the interaction takes place upon Ca(2+)-store depletion and inhibits the association with SARAF. Interacts with ASPH. Interacts with SLC35G1; intracellular Ca(2+)-dependent. May interact with ATP1A1, ATP2A2, ATP2B1, ATP2B4, KPNB1 and XPO1; through SLC35G1. Interacts with TMEM203. Interacts with STIMATE, promoting STIM1 conformational switch. Interacts with TMEM178A. Interacts with CASQ1 (via C-terminal end and preferentially with the monomeric form); this interaction increases in response to a depletion of intracellular Ca(2+), decreases both STIM1 aggregation and clustering, interaction of STIM1 with ORAI1 and store-operated Ca(2+) entry (SOCE) activity. Interacts with ADCY8. Post-translationally, glycosylation is required for cell surface expression. In terms of processing, phosphorylated predominantly on Ser residues.

Its subcellular location is the cell membrane. It is found in the endoplasmic reticulum membrane. The protein resides in the sarcoplasmic reticulum. It localises to the cytoplasm. The protein localises to the cytoskeleton. In terms of biological role, acts as a Ca(2+) sensor that gates two major inward rectifying Ca(2+) channels at the plasma membrane: Ca(2+) release-activated Ca(2+) (CRAC) channels and arachidonate-regulated Ca(2+)-selective (ARC) channels. Plays a role in mediating store-operated Ca(2+) entry (SOCE), a Ca(2+) influx following depletion of intracellular Ca(2+) stores. Upon Ca(2+) depletion, translocates from the endoplasmic reticulum to the plasma membrane where it activates CRAC channel pore-forming subunits ORA1, ORA2 and ORAI3 to generate sustained and oscillatory Ca(2+) entry. Involved in enamel formation. This is Stromal interaction molecule 1 from Rattus norvegicus (Rat).